Here is a 294-residue protein sequence, read N- to C-terminus: Bifunctional protein FolD (294 aa).

NADP(+)-binding positions include 175 to 177 and Ile-243; that span reads GVS.

This sequence belongs to the tetrahydrofolate dehydrogenase/cyclohydrolase family. Homodimer.

It carries out the reaction (6R)-5,10-methylene-5,6,7,8-tetrahydrofolate + NADP(+) = (6R)-5,10-methenyltetrahydrofolate + NADPH. It catalyses the reaction (6R)-5,10-methenyltetrahydrofolate + H2O = (6R)-10-formyltetrahydrofolate + H(+). It participates in one-carbon metabolism; tetrahydrofolate interconversion. Catalyzes the oxidation of 5,10-methylenetetrahydrofolate to 5,10-methenyltetrahydrofolate and then the hydrolysis of 5,10-methenyltetrahydrofolate to 10-formyltetrahydrofolate. In Xanthomonas campestris pv. campestris (strain 8004), this protein is Bifunctional protein FolD.